A 75-amino-acid chain; its full sequence is Sec-independent protein translocase protein TatA (75 aa).

A helical membrane pass occupies residues 1 to 21 (MGSMSIWHWIVVLAVVLLLFG). Positions 43 to 75 (MAEDDDAPAKPAEPPRAVPHQATPAPESEKKAV) are disordered.

This sequence belongs to the TatA/E family. The Tat system comprises two distinct complexes: a TatABC complex, containing multiple copies of TatA, TatB and TatC subunits, and a separate TatA complex, containing only TatA subunits. Substrates initially bind to the TatABC complex, which probably triggers association of the separate TatA complex to form the active translocon.

The protein resides in the cell inner membrane. In terms of biological role, part of the twin-arginine translocation (Tat) system that transports large folded proteins containing a characteristic twin-arginine motif in their signal peptide across membranes. TatA could form the protein-conducting channel of the Tat system. The sequence is that of Sec-independent protein translocase protein TatA from Azorhizobium caulinodans (strain ATCC 43989 / DSM 5975 / JCM 20966 / LMG 6465 / NBRC 14845 / NCIMB 13405 / ORS 571).